The sequence spans 325 residues: tRNA(Ile)-lysidine synthase (325 aa).

Residue 35–40 participates in ATP binding; sequence SGGQDS.

The protein belongs to the tRNA(Ile)-lysidine synthase family.

The protein localises to the cytoplasm. The enzyme catalyses cytidine(34) in tRNA(Ile2) + L-lysine + ATP = lysidine(34) in tRNA(Ile2) + AMP + diphosphate + H(+). Its function is as follows. Ligates lysine onto the cytidine present at position 34 of the AUA codon-specific tRNA(Ile) that contains the anticodon CAU, in an ATP-dependent manner. Cytidine is converted to lysidine, thus changing the amino acid specificity of the tRNA from methionine to isoleucine. The protein is tRNA(Ile)-lysidine synthase of Gloeobacter violaceus (strain ATCC 29082 / PCC 7421).